We begin with the raw amino-acid sequence, 426 residues long: Tol-Pal system protein TolB (426 aa).

Positions 1–24 (MKLKSRYTSLISVVSIFFSSMVMA) are cleaved as a signal peptide.

The protein belongs to the TolB family. As to quaternary structure, the Tol-Pal system is composed of five core proteins: the inner membrane proteins TolA, TolQ and TolR, the periplasmic protein TolB and the outer membrane protein Pal. They form a network linking the inner and outer membranes and the peptidoglycan layer.

It is found in the periplasm. Part of the Tol-Pal system, which plays a role in outer membrane invagination during cell division and is important for maintaining outer membrane integrity. The sequence is that of Tol-Pal system protein TolB from Haemophilus ducreyi (strain 35000HP / ATCC 700724).